A 125-amino-acid chain; its full sequence is MQTPLATPVPVLRLPRGPDGSNRGFAPDGRRAPPKPEVPEPPESRESWEQQARASLRERYLRSLLAMVGRPVCFTLHEGVQVIAHFGATDLDVANFYVSQLQTPIGIQAEALLRCSDIISYTFKP.

At Met1 the chain carries N-acetylmethionine. The region spanning 1-29 is the SUZ-C domain; that stretch reads MQTPLATPVPVLRLPRGPDGSNRGFAPDG. The interval 1 to 52 is disordered; that stretch reads MQTPLATPVPVLRLPRGPDGSNRGFAPDGRRAPPKPEVPEPPESRESWEQQA. Residue Thr3 is modified to Phosphothreonine. A Sm domain is found at 59-125; the sequence is RYLRSLLAMV…SDIISYTFKP (67 aa).

This sequence belongs to the gemin-7 family. Part of the core SMN complex that contains SMN1, GEMIN2/SIP1, DDX20/GEMIN3, GEMIN4, GEMIN5, GEMIN6, GEMIN7, GEMIN8 and STRAP/UNRIP. Part of the SMN-Sm complex that contains SMN1, GEMIN2/SIP1, DDX20/GEMIN3, GEMIN4, GEMIN5, GEMIN6, GEMIN7, GEMIN8, STRAP/UNRIP and the Sm proteins SNRPB, SNRPD1, SNRPD2, SNRPD3, SNRPE, SNRPF and SNRPG. Interacts with GEMIN6; the interaction is direct. Interacts with STRAP/UNRIP; the interaction is direct. Interacts with GEMIN8; the interaction is direct. Interacts with SNRPB, SNRPD2, SNRPD3 and SNRPE; the interaction is direct.

It localises to the nucleus. The protein resides in the nucleoplasm. It is found in the gem. The protein localises to the cytoplasm. The SMN complex catalyzes the assembly of small nuclear ribonucleoproteins (snRNPs), the building blocks of the spliceosome, and thereby plays an important role in the splicing of cellular pre-mRNAs. Most spliceosomal snRNPs contain a common set of Sm proteins SNRPB, SNRPD1, SNRPD2, SNRPD3, SNRPE, SNRPF and SNRPG that assemble in a heptameric protein ring on the Sm site of the small nuclear RNA to form the core snRNP (Sm core). In the cytosol, the Sm proteins SNRPD1, SNRPD2, SNRPE, SNRPF and SNRPG are trapped in an inactive 6S pICln-Sm complex by the chaperone CLNS1A that controls the assembly of the core snRNP. To assemble core snRNPs, the SMN complex accepts the trapped 5Sm proteins from CLNS1A forming an intermediate. Binding of snRNA inside 5Sm triggers eviction of the SMN complex, thereby allowing binding of SNRPD3 and SNRPB to complete assembly of the core snRNP. The sequence is that of Gem-associated protein 7 (GEMIN7) from Bos taurus (Bovine).